The primary structure comprises 450 residues: Glutamate--tRNA ligase 1 (450 aa).

Residues 7-17 (PSPTGYMHVGN) carry the 'HIGH' region motif. The 'KMSKS' region signature appears at 236-240 (KISKR). Position 239 (K239) interacts with ATP.

Belongs to the class-I aminoacyl-tRNA synthetase family. Glutamate--tRNA ligase type 1 subfamily. In terms of assembly, monomer.

Its subcellular location is the cytoplasm. The catalysed reaction is tRNA(Glu) + L-glutamate + ATP = L-glutamyl-tRNA(Glu) + AMP + diphosphate. Its function is as follows. Catalyzes the attachment of glutamate to tRNA(Glu) in a two-step reaction: glutamate is first activated by ATP to form Glu-AMP and then transferred to the acceptor end of tRNA(Glu). The sequence is that of Glutamate--tRNA ligase 1 from Anaplasma phagocytophilum (strain HZ).